Here is a 46-residue protein sequence, read N- to C-terminus: Toxin PhcrTx2 (46 aa).

Intrachain disulfides connect Cys4/Cys40, Cys6/Cys32, and Cys22/Cys41.

Belongs to the sea anemone type 3 (BDS) potassium channel toxin family.

The protein resides in the secreted. Its subcellular location is the nematocyst. Neurotoxin that induces paralysis (but not death) to U.thayeri crabs. Partially and reversibly inhibits glutamate-evoked peak currents (IC(50)=4.7 uM) but not voltage-gated potassium channel currents in cultured isolated neurons from the land snail H.aspersa. Weakly inhibits voltage-gated potassium peak currents (IC(50)=6.4 uM) and steady-state currents (IC(50)=8.2 uM) in rat dorsal root ganglion (DRG) neurons. Weakly inhibits voltage-gated sodium currents in rat DRG neurons (IC(50)=0.9 uM). The protein is Toxin PhcrTx2 of Phymanthus crucifer (Red beaded anemone).